The primary structure comprises 818 residues: Adhesion G protein-coupled receptor E5 (818 aa).

Residues 1–23 (MRGVRCPGLLVVCILLSLSGAGT) form the signal peptide. The Extracellular portion of the chain corresponds to 24–533 (QKAESKNCAK…VQDPRLELIT (510 aa)). In terms of domain architecture, EGF-like 1 spans 27–68 (ESKNCAKWCPINSKCVSNRSCVCKPGFSSEKELITNPAESCE). 12 disulfides stabilise this stretch: cysteine 31-cysteine 41, cysteine 35-cysteine 47, cysteine 49-cysteine 67, cysteine 73-cysteine 86, cysteine 80-cysteine 95, cysteine 97-cysteine 118, cysteine 169-cysteine 182, cysteine 176-cysteine 191, cysteine 193-cysteine 212, cysteine 218-cysteine 231, cysteine 225-cysteine 240, and cysteine 242-cysteine 260. N-linked (GlcNAc...) asparagine glycosylation is present at asparagine 44. The 51-residue stretch at 69–119 (DINECLLPGFSCGDFAMCKNSEGSYTCVCNLGYKLLSGAESFVNESENTCQ) folds into the EGF-like 2; calcium-binding domain. Residue asparagine 112 is glycosylated (N-linked (GlcNAc...) asparagine). The EGF-like 3; calcium-binding domain occupies 165–213 (DVNECISGQNHCHQSTHCINKLGGYSCICRQGWKPVPGSPNGPVSTVCE). In terms of domain architecture, EGF-like 4; calcium-binding spans 214–261 (DVDECSSGQHQCHNSTVCKNTVGSYKCHCRPGWKPTSGSLRGPDTICQ). Asparagine 227 carries N-linked (GlcNAc...) asparagine glycosylation. Residues asparagine 299 and asparagine 395 are each glycosylated (N-linked (GlcNAc...) asparagine). Residues 347-525 (PFTYTSPSNT…AILMAQYHVQ (179 aa)) form the GAIN-B domain. The residue at position 425 (serine 425) is a Phosphoserine. 2 N-linked (GlcNAc...) asparagine glycosylation sites follow: asparagine 461 and asparagine 502. Disulfide bonds link cysteine 482–cysteine 507 and cysteine 499–cysteine 509. The segment at 482–525 (CAFWKAHNGNGYWDTDGCSMNGTGFCHCNHLTSFAILMAQYHVQ) is GPS. The helical transmembrane segment at 534-554 (KVGLLLSLICLLLCILTFLLV) threads the bilayer. Residues 555 to 562 (KPIQSSRT) are Cytoplasmic-facing. The helical transmembrane segment at 563 to 583 (MVHLHLCICLFLGSIIFLVGV) threads the bilayer. Topologically, residues 584–602 (ENEGGEVGLRCRLVAMMLH) are extracellular. The chain crosses the membrane as a helical span at residues 603-623 (FCFLAAFCWMALEGVELYFLV). At 624 to 637 (VRVFQGQGLSTWQR) the chain is on the cytoplasmic side. Residues 638 to 658 (CLIGYGVPLLIVAISMAVVKM) form a helical membrane-spanning segment. Topologically, residues 659-679 (DGYGHATYCWLDFRKQGFLWS) are extracellular. The chain crosses the membrane as a helical span at residues 680–700 (FSGPVAFIIFCNAAIFVITVW). At 701–723 (KLTKKFSEINPNMKKLRKARVLT) the chain is on the cytoplasmic side. The helical transmembrane segment at 724–744 (ITAIAQLLVLGCTWGFGLFLF) threads the bilayer. The Extracellular segment spans residues 745 to 752 (NPHSTWLS). The chain crosses the membrane as a helical span at residues 753–773 (YIFTLLNCLQGLFLYVMLCLL). At 774–818 (NKKVREEYWKWACMVTGSKYTEFNSSTTGTGTSQTRALRSSESGM) the chain is on the cytoplasmic side. Serine 798 carries the post-translational modification Phosphoserine. Residues 799–808 (STTGTGTSQT) are compositionally biased toward low complexity. Positions 799-818 (STTGTGTSQTRALRSSESGM) are disordered. Threonine 808 is modified (phosphothreonine). The segment covering 809-818 (RALRSSESGM) has biased composition (polar residues). A phosphoserine mark is found at serine 814 and serine 816.

Belongs to the G-protein coupled receptor 2 family. LN-TM7 subfamily. Forms a heterodimer, consisting of a large extracellular region (alpha subunit) non-covalently linked to a seven-transmembrane moiety (beta subunit). Interacts with complement decay-accelerating factor (DAF). The largest isoform (isoform 1) do not interact with DAF. Also interacts with chondroitin sulfate. Proteolytically cleaved into 2 subunits, an extracellular alpha subunit and a seven-transmembrane subunit. As to expression, although predominantly expressed by cells of the immune system, expressed ubiquitously with particularly high levels of expression in the lung and the thymus gland. In the spleen, expression is detected on most myeloid cells and variable portions of T-cells, B-cells and NK cells. In the bone marrow, expressed in nearly all myeloid cells, whereas little if any expression is found on erythroid cells.

The protein localises to the cell membrane. It localises to the secreted. The protein resides in the extracellular space. Receptor potentially involved in both adhesion and signaling processes early after leukocyte activation. Plays an essential role in leukocyte migration. In Mus musculus (Mouse), this protein is Adhesion G protein-coupled receptor E5.